The following is a 211-amino-acid chain: Cytochrome c biogenesis ATP-binding export protein CcmA (211 aa).

The region spanning 8-210 is the ABC transporter domain; that stretch reads LEAKNLQCER…EVRRIQLGAV (203 aa). Residue 40 to 47 participates in ATP binding; the sequence is GPNGAGKT.

This sequence belongs to the ABC transporter superfamily. CcmA exporter (TC 3.A.1.107) family. As to quaternary structure, the complex is composed of two ATP-binding proteins (CcmA) and two transmembrane proteins (CcmB).

The protein resides in the cell inner membrane. The enzyme catalyses heme b(in) + ATP + H2O = heme b(out) + ADP + phosphate + H(+). Its function is as follows. Part of the ABC transporter complex CcmAB involved in the biogenesis of c-type cytochromes; once thought to export heme, this seems not to be the case, but its exact role is uncertain. Responsible for energy coupling to the transport system. The sequence is that of Cytochrome c biogenesis ATP-binding export protein CcmA from Hahella chejuensis (strain KCTC 2396).